The sequence spans 357 residues: Tetraacyldisaccharide 4'-kinase (357 aa).

49 to 56 (TIGGTGKT) is a binding site for ATP.

Belongs to the LpxK family.

The enzyme catalyses a lipid A disaccharide + ATP = a lipid IVA + ADP + H(+). It functions in the pathway glycolipid biosynthesis; lipid IV(A) biosynthesis; lipid IV(A) from (3R)-3-hydroxytetradecanoyl-[acyl-carrier-protein] and UDP-N-acetyl-alpha-D-glucosamine: step 6/6. Transfers the gamma-phosphate of ATP to the 4'-position of a tetraacyldisaccharide 1-phosphate intermediate (termed DS-1-P) to form tetraacyldisaccharide 1,4'-bis-phosphate (lipid IVA). This is Tetraacyldisaccharide 4'-kinase from Porphyromonas gingivalis (strain ATCC 33277 / DSM 20709 / CIP 103683 / JCM 12257 / NCTC 11834 / 2561).